The following is a 149-amino-acid chain: Ribonuclease pancreatic (149 aa).

Residues 1–25 (MGLEKSFILFSLLVLVLGWVQPSLG) form the signal peptide. Residues lysine 32 and arginine 35 each contribute to the substrate site. The active-site Proton acceptor is histidine 37. 4 cysteine pairs are disulfide-bonded: cysteine 51–cysteine 109, cysteine 65–cysteine 120, cysteine 83–cysteine 135, and cysteine 90–cysteine 97. Residues 66–70 (KPVNT), lysine 91, and arginine 110 contribute to the substrate site. Histidine 144 functions as the Proton donor in the catalytic mechanism.

The protein belongs to the pancreatic ribonuclease family. As to quaternary structure, monomer. Interacts with and forms tight 1:1 complexes with RNH1. Dimerization of two such complexes may occur. Interaction with RNH1 inhibits this protein. In terms of tissue distribution, pancreas.

It localises to the secreted. It carries out the reaction an [RNA] containing cytidine + H2O = an [RNA]-3'-cytidine-3'-phosphate + a 5'-hydroxy-ribonucleotide-3'-[RNA].. The enzyme catalyses an [RNA] containing uridine + H2O = an [RNA]-3'-uridine-3'-phosphate + a 5'-hydroxy-ribonucleotide-3'-[RNA].. Its function is as follows. Endonuclease that catalyzes the cleavage of RNA on the 3' side of pyrimidine nucleotides. Acts on single-stranded and double-stranded RNA. This Leopoldamys edwardsi (Edwards's long-tailed giant rat) protein is Ribonuclease pancreatic (RNASE1).